The chain runs to 378 residues: Rhodopsin (378 aa).

Over Met-1 to Trp-53 the chain is Extracellular. Asn-24 is a glycosylation site (N-linked (GlcNAc...) asparagine). Residues His-54 to Ile-78 traverse the membrane as a helical segment. Topologically, residues Phe-79 to Asn-90 are cytoplasmic. Residues Leu-91–Cys-115 form a helical membrane-spanning segment. The Extracellular segment spans residues Tyr-116–Tyr-130. An intrachain disulfide couples Cys-127 to Cys-204. A helical membrane pass occupies residues Gly-131–Phe-150. Over Asp-151–Gly-169 the chain is Cytoplasmic. The helical transmembrane segment at Ala-170 to Asn-193 threads the bilayer. Residues Arg-194 to Ser-217 lie on the Extracellular side of the membrane. Asn-200 carries an N-linked (GlcNAc...) asparagine glycan. A helical transmembrane segment spans residues Tyr-218 to Val-245. At Ala-246–Lys-280 the chain is on the cytoplasmic side. The helical transmembrane segment at Val-281–Ile-304 threads the bilayer. The Extracellular segment spans residues Phe-305 to Ser-311. The chain crosses the membrane as a helical span at residues Pro-312–Ser-336. Lys-323 carries the post-translational modification N6-(retinylidene)lysine. Over His-337–Ala-378 the chain is Cytoplasmic.

The protein belongs to the G-protein coupled receptor 1 family. Opsin subfamily. In terms of processing, phosphorylated on some or all of the serine and threonine residues present in the C-terminal region.

The protein localises to the membrane. Its function is as follows. Visual pigments are the light-absorbing molecules that mediate vision. They consist of an apoprotein, opsin, covalently linked to cis-retinal. The sequence is that of Rhodopsin from Camponotus atriceps (Florida carpenter ant).